A 151-amino-acid chain; its full sequence is UPF0735 ACT domain-containing protein SERP1207 (151 aa).

The ACT domain occupies 74–149; sequence TLILYVNDIV…HVTKVDLISM (76 aa).

It belongs to the UPF0735 family.

The protein is UPF0735 ACT domain-containing protein SERP1207 of Staphylococcus epidermidis (strain ATCC 35984 / DSM 28319 / BCRC 17069 / CCUG 31568 / BM 3577 / RP62A).